The primary structure comprises 402 residues: Protochlorophyllide reductase B, chloroplastic (402 aa).

This sequence belongs to the short-chain dehydrogenases/reductases (SDR) family. POR subfamily.

The protein localises to the plastid. It is found in the chloroplast. It catalyses the reaction chlorophyllide a + NADP(+) = protochlorophyllide a + NADPH + H(+). It participates in porphyrin-containing compound metabolism; chlorophyll biosynthesis. In terms of biological role, phototransformation of protochlorophyllide (Pchlide) to chlorophyllide (Chlide). This is Protochlorophyllide reductase B, chloroplastic (PORB) from Oryza sativa subsp. japonica (Rice).